The primary structure comprises 271 residues: Phosphatidylinositol transfer protein beta isoform (271 aa).

At Lys-215 the chain carries N6-acetyllysine. A Phosphoserine; by PKC modification is found at Ser-262.

It belongs to the PtdIns transfer protein family. PI transfer class I subfamily. Constitutive phosphorylation of Ser-262 has no effect on phospholipid transfer activity but is required for Golgi targeting.

It localises to the golgi apparatus. The protein localises to the golgi apparatus membrane. It is found in the endoplasmic reticulum membrane. The catalysed reaction is a 1,2-diacyl-sn-glycero-3-phosphocholine(in) = a 1,2-diacyl-sn-glycero-3-phosphocholine(out). It catalyses the reaction a 1,2-diacyl-sn-glycero-3-phospho-(1D-myo-inositol)(in) = a 1,2-diacyl-sn-glycero-3-phospho-(1D-myo-inositol)(out). It carries out the reaction an N-(acyl)-sphingosylphosphocholine(in) = an N-(acyl)-sphingosylphosphocholine(out). Functionally, catalyzes the transfer of phosphatidylinositol, phosphatidylcholine and sphingomyelin between membranes. Required for COPI-mediated retrograde transport from the Golgi to the endoplasmic reticulum; phosphatidylinositol and phosphatidylcholine transfer activity is essential for this function. This Mus musculus (Mouse) protein is Phosphatidylinositol transfer protein beta isoform (Pitpnb).